The primary structure comprises 328 residues: Malate dehydrogenase (328 aa).

NAD(+) is bound at residue 13 to 19; that stretch reads GGKGQIA. Residues R94 and R100 each contribute to the substrate site. Residues N107, Q114, and 131-133 each bind NAD(+); that span reads VGN. Residues N133 and R164 each contribute to the substrate site. Residue H189 is the Proton acceptor of the active site.

The protein belongs to the LDH/MDH superfamily. MDH type 2 family.

It catalyses the reaction (S)-malate + NAD(+) = oxaloacetate + NADH + H(+). In terms of biological role, catalyzes the reversible oxidation of malate to oxaloacetate. This Chlamydia pneumoniae (Chlamydophila pneumoniae) protein is Malate dehydrogenase.